The primary structure comprises 275 residues: 4-hydroxy-tetrahydrodipicolinate reductase (275 aa).

NAD(+) is bound by residues G13–M18 and G108–T110. H164 (proton donor/acceptor) is an active-site residue. A (S)-2,3,4,5-tetrahydrodipicolinate-binding site is contributed by H165. The active-site Proton donor is the K168. Residue G174 to T175 participates in (S)-2,3,4,5-tetrahydrodipicolinate binding.

It belongs to the DapB family.

Its subcellular location is the cytoplasm. It catalyses the reaction (S)-2,3,4,5-tetrahydrodipicolinate + NAD(+) + H2O = (2S,4S)-4-hydroxy-2,3,4,5-tetrahydrodipicolinate + NADH + H(+). The catalysed reaction is (S)-2,3,4,5-tetrahydrodipicolinate + NADP(+) + H2O = (2S,4S)-4-hydroxy-2,3,4,5-tetrahydrodipicolinate + NADPH + H(+). It participates in amino-acid biosynthesis; L-lysine biosynthesis via DAP pathway; (S)-tetrahydrodipicolinate from L-aspartate: step 4/4. Its function is as follows. Catalyzes the conversion of 4-hydroxy-tetrahydrodipicolinate (HTPA) to tetrahydrodipicolinate. This Picosynechococcus sp. (strain ATCC 27264 / PCC 7002 / PR-6) (Agmenellum quadruplicatum) protein is 4-hydroxy-tetrahydrodipicolinate reductase.